We begin with the raw amino-acid sequence, 102 residues long: Small ribosomal subunit protein uS10 (102 aa).

Belongs to the universal ribosomal protein uS10 family. In terms of assembly, part of the 30S ribosomal subunit.

Involved in the binding of tRNA to the ribosomes. In Streptococcus mutans serotype c (strain ATCC 700610 / UA159), this protein is Small ribosomal subunit protein uS10.